The following is a 386-amino-acid chain: Lipoyl synthase, mitochondrial (386 aa).

Residues 1–48 (MHGRRHLAASLTRALTQAPSRSISSTPSLLQTLDPSVPSPSPPPAAEP) are disordered. The segment covering 13–34 (RALTQAPSRSISSTPSLLQTLD) has biased composition (polar residues). The segment covering 37–46 (VPSPSPPPAA) has biased composition (pro residues). Positions 113, 118, 124, 144, 148, 151, and 360 each coordinate [4Fe-4S] cluster. Residues 129 to 349 (ETGTATATIM…RALGVEMGFR (221 aa)) enclose the Radical SAM core domain.

This sequence belongs to the radical SAM superfamily. Lipoyl synthase family. Requires [4Fe-4S] cluster as cofactor.

It is found in the mitochondrion. The catalysed reaction is [[Fe-S] cluster scaffold protein carrying a second [4Fe-4S](2+) cluster] + N(6)-octanoyl-L-lysyl-[protein] + 2 oxidized [2Fe-2S]-[ferredoxin] + 2 S-adenosyl-L-methionine + 4 H(+) = [[Fe-S] cluster scaffold protein] + N(6)-[(R)-dihydrolipoyl]-L-lysyl-[protein] + 4 Fe(3+) + 2 hydrogen sulfide + 2 5'-deoxyadenosine + 2 L-methionine + 2 reduced [2Fe-2S]-[ferredoxin]. The protein operates within protein modification; protein lipoylation via endogenous pathway; protein N(6)-(lipoyl)lysine from octanoyl-[acyl-carrier-protein]: step 2/2. Its function is as follows. Catalyzes the radical-mediated insertion of two sulfur atoms into the C-6 and C-8 positions of the octanoyl moiety bound to the lipoyl domains of lipoate-dependent enzymes, thereby converting the octanoylated domains into lipoylated derivatives. The protein is Lipoyl synthase, mitochondrial of Sorghum bicolor (Sorghum).